We begin with the raw amino-acid sequence, 107 residues long: Iron-binding protein IscA (107 aa).

Positions 35, 99, and 101 each coordinate Fe cation.

It belongs to the HesB/IscA family. In terms of assembly, homodimer; may form tetramers and higher multimers. Requires Fe cation as cofactor.

Functionally, is able to transfer iron-sulfur clusters to apo-ferredoxin. Multiple cycles of [2Fe2S] cluster formation and transfer are observed, suggesting that IscA acts catalytically. Recruits intracellular free iron so as to provide iron for the assembly of transient iron-sulfur cluster in IscU in the presence of IscS, L-cysteine and the thioredoxin reductase system TrxA/TrxB. This Xenorhabdus nematophila (strain ATCC 19061 / DSM 3370 / CCUG 14189 / LMG 1036 / NCIMB 9965 / AN6) protein is Iron-binding protein IscA.